The primary structure comprises 65 residues: MGTVKPAYIKVIARELLKKYPEVFTGNFDENKRLVAELTNIQSKTVRNRVAGYITRRVNRGLVNV.

Belongs to the eukaryotic ribosomal protein eS17 family.

This Archaeoglobus fulgidus (strain ATCC 49558 / DSM 4304 / JCM 9628 / NBRC 100126 / VC-16) protein is Small ribosomal subunit protein eS17.